The sequence spans 157 residues: Endoribonuclease YbeY (157 aa).

His122, His126, and His132 together coordinate Zn(2+).

Belongs to the endoribonuclease YbeY family. Requires Zn(2+) as cofactor.

The protein localises to the cytoplasm. Functionally, single strand-specific metallo-endoribonuclease involved in late-stage 70S ribosome quality control and in maturation of the 3' terminus of the 16S rRNA. This is Endoribonuclease YbeY from Bacillus subtilis (strain 168).